A 1076-amino-acid polypeptide reads, in one-letter code: Histone deacetylase 4 (1076 aa).

Positions 66-169 (REQQLQQELL…GKESAVASTE (104 aa)) form a coiled coil. Residues 117-312 (MLAMKHQQEL…NSSSGNVSTE (196 aa)) form an interaction with MEF2A region. Over residues 132–162 (KLERHRQEQELEKQHREQKLQQLKNKEKGKE) the composition is skewed to basic and acidic residues. 3 disordered regions span residues 132-166 (KLER…SAVA), 205-225 (TQHS…ASYN), and 239-323 (PLRK…PSAP). Positions 205-224 (TQHSSLDQSSPPQSGVSASY) are enriched in polar residues. Ser-209 carries the post-translational modification Phosphoserine. Ser-245 is modified (phosphoserine; by CaMK4 and SIK1). Basic and acidic residues predominate over residues 258-273 (KVAERRSSPLLRRKDG). Low complexity predominate over residues 289-310 (SACSSAPGSGPSSPNSSSGNVS). The short motif at 348 to 353 (PSLPNI) is the PxLPxI/L motif; mediates interaction with ANKRA2 and 14-3-3 proteins element. The residue at position 349 (Ser-349) is a Phosphoserine. A Phosphoserine; by CaMK4 and SIK1 modification is found at Ser-465. Disordered regions lie at residues 506-529 (ISKP…ELRE), 541-580 (RLPG…QRPA), and 622-645 (RPLS…EPPT). The segment covering 514–529 (RQPESHPEETEEELRE) has biased composition (basic and acidic residues). Lys-556 participates in a covalent cross-link: Glycyl lysine isopeptide (Lys-Gly) (interchain with G-Cter in SUMO). Position 562 is a phosphoserine (Ser-562). A compositionally biased stretch (polar residues) spans 626–638 (RAQSSPASATFPM). Residue Ser-629 is modified to Phosphoserine; by CaMK4. Ser-630 carries the phosphoserine modification. The histone deacetylase stretch occupies residues 652–1076 (GLVYDTLMLK…EEPMEEEPPL (425 aa)). Positions 664, 666, 672, and 743 each coordinate Zn(2+). The active site involves His-795. The Nuclear export signal motif lies at 1043–1076 (EEAETVTAMASLSVGVKPAEKRSEEEPMEEEPPL).

This sequence belongs to the histone deacetylase family. HD type 2 subfamily. As to quaternary structure, homodimer. Homodimerization via its N-terminal domain. Interacts with HDAC7. Interacts with MEF2A, MEF2C, MEF2D, MORC2 and NR2C1. Interacts with a 14-3-3 chaperone proteins in a phosphorylation dependent manner. Interacts with 14-3-3 protein YWHAB. Interacts with BTBD14B. Interacts with KDM5B. Interacts (via PxLPxI/L motif) with ANKRA2 (via ankyrin repeats). Interacts with CUL7 (as part of the 3M complex); negatively regulated by ANKRA2. Interacts with EP300 in the presence of TFAP2C. Interacts with AHRR. Interacts with MYOCD. Interacts with HSPA1A and HSPA1B leading to their deacetylation at 'Lys-77'. Interacts with ZBTB7B; the interaction allows the recruitment of HDAC4 on CD8 loci for deacetylation and possible inhibition of CD8 genes expression. Interacts with DHX36. Interacts with SIK3; this interaction leads to HDAC4 retention in the cytoplasm. Interacts with ZNF638. In terms of processing, phosphorylated by CaMK4 at Ser-245, Ser-465 and Ser-629. Phosphorylation at other residues by CaMK2D is required for the interaction with 14-3-3. Phosphorylation at Ser-349, within the PxLPxI/L motif, impairs the binding of ANKRA2 but generates a high-affinity docking site for 14-3-3. Sumoylation on Lys-556 is promoted by the E3 SUMO-protein ligase RANBP2, and prevented by phosphorylation by CaMK4.

It is found in the nucleus. It localises to the cytoplasm. The enzyme catalyses N(6)-acetyl-L-lysyl-[histone] + H2O = L-lysyl-[histone] + acetate. Its function is as follows. Responsible for the deacetylation of lysine residues on the N-terminal part of the core histones (H2A, H2B, H3 and H4). Histone deacetylation gives a tag for epigenetic repression and plays an important role in transcriptional regulation, cell cycle progression and developmental events. Histone deacetylases act via the formation of large multiprotein complexes. Involved in muscle maturation via its interaction with the myocyte enhancer factors such as MEF2A, MEF2C and MEF2D. Deacetylates HSPA1A and HSPA1A at 'Lys-77' leading to their preferential binding to co-chaperone STUB1. This is Histone deacetylase 4 (Hdac4) from Mus musculus (Mouse).